We begin with the raw amino-acid sequence, 506 residues long: MKKILFMDTTLRDGEQSPGVNLNEQEKLQIARQLERLGIHVMEAGFAAASEGDFQSVKRIANTIQNATVMSLARAKESDIRRAYEAVKGAVSPRLHVFLATSDIHMKYKLCMSKEDVLDSIYRSVTLGKSLFPTVQFSAEDATRTARDFLAEAVEVAIRAGANVINIPDTVGYTNPEEYYSLFKYLQESVPSYEKAIFSCHCHDDLGMAVANSLAAVEGGALQVEGTINGIGERAGNAALEEVAVALHIRKDFYKAEPSMTLKEIKATSTLVSRLTGMVVPKNKAIVGANAFAHESGIHQDGVLKEVTTYEIIEPALVGESQNLFVLGKHSGRHAFTEKMKELGYEFTNDERDAVFEAFKKLADRKKEITEEDLRALMLGEAAFAAQQYNITQLQVHFVSNSTQCATVVLKDEEGNVFEDAATGSGSIEAIYNAIQRILGLECELADYRIQSITQGQDALAHVHVELKEGAHQVSGFGVAQDVLEASARAYVHAAGKLKSFIQLVK.

Residues 4 to 266 (ILFMDTTLRD…EPSMTLKEIK (263 aa)) enclose the Pyruvate carboxyltransferase domain. Positions 13, 201, 203, and 237 each coordinate Mn(2+). The segment at 390–506 (NITQLQVHFV…KLKSFIQLVK (117 aa)) is regulatory domain.

It belongs to the alpha-IPM synthase/homocitrate synthase family. LeuA type 1 subfamily. Homodimer. Requires Mn(2+) as cofactor.

It is found in the cytoplasm. It carries out the reaction 3-methyl-2-oxobutanoate + acetyl-CoA + H2O = (2S)-2-isopropylmalate + CoA + H(+). Its pathway is amino-acid biosynthesis; L-leucine biosynthesis; L-leucine from 3-methyl-2-oxobutanoate: step 1/4. In terms of biological role, catalyzes the condensation of the acetyl group of acetyl-CoA with 3-methyl-2-oxobutanoate (2-ketoisovalerate) to form 3-carboxy-3-hydroxy-4-methylpentanoate (2-isopropylmalate). The polypeptide is 2-isopropylmalate synthase (Bacillus cereus (strain ZK / E33L)).